Reading from the N-terminus, the 513-residue chain is Xylose import ATP-binding protein XylG (513 aa).

2 ABC transporter domains span residues 5–242 (LEMK…VGRE) and 259–505 (LRIE…LRSE). 37 to 44 (GENGSGKS) contributes to the ATP binding site.

It belongs to the ABC transporter superfamily. Xylose importer (TC 3.A.1.2.4) family. The complex is composed of two ATP-binding proteins (XylG), two transmembrane proteins (XylH) and a solute-binding protein (XylF).

Its subcellular location is the cell inner membrane. The enzyme catalyses D-xylose(out) + ATP + H2O = D-xylose(in) + ADP + phosphate + H(+). In terms of biological role, part of the ABC transporter complex XylFGH involved in xylose import. Responsible for energy coupling to the transport system. The polypeptide is Xylose import ATP-binding protein XylG (Escherichia coli O6:K15:H31 (strain 536 / UPEC)).